Reading from the N-terminus, the 581-residue chain is Potassium-transporting ATPase potassium-binding subunit (581 aa).

Transmembrane regions (helical) follow at residues 2-22 (LQGW…TPFF), 74-94 (AVIA…PLNP), 135-155 (GLGY…IAFI), 177-197 (ILLP…VPET), 255-275 (LVQL…YGVF), 284-304 (LIYL…AIGE), 332-352 (WAQS…AVIA), 357-377 (LMPN…VFGG), 381-401 (GTAY…LMVG), 421-441 (FLIL…ALAF), 501-521 (LSAC…LLLL), and 550-570 (AGVI…LGPI).

It belongs to the KdpA family. In terms of assembly, the system is composed of three essential subunits: KdpA, KdpB and KdpC.

The protein localises to the cell inner membrane. In terms of biological role, part of the high-affinity ATP-driven potassium transport (or Kdp) system, which catalyzes the hydrolysis of ATP coupled with the electrogenic transport of potassium into the cytoplasm. This subunit binds the periplasmic potassium ions and delivers the ions to the membrane domain of KdpB through an intramembrane tunnel. The polypeptide is Potassium-transporting ATPase potassium-binding subunit (Microcystis aeruginosa (strain NIES-843 / IAM M-2473)).